The primary structure comprises 155 residues: Endoribonuclease YbeY (155 aa).

Zn(2+) is bound by residues His114, His118, and His124.

Belongs to the endoribonuclease YbeY family. Zn(2+) serves as cofactor.

It localises to the cytoplasm. Functionally, single strand-specific metallo-endoribonuclease involved in late-stage 70S ribosome quality control and in maturation of the 3' terminus of the 16S rRNA. In Escherichia coli O81 (strain ED1a), this protein is Endoribonuclease YbeY.